We begin with the raw amino-acid sequence, 381 residues long: MEPPGPSTPTASAAARADHYTPGLRPLPKRRLLYSFALLLAVLQAVFVPVTANPAHNRPAGLQRPEESPSRGPCLAGQYLSEGNCKPCREGIDYTSHSNHSLDSCILCTVCKEDKVVETRCNITTNTVCRCKPGTFEDKDSPEICQSCSNCTDGEEELTSCTPRENRKCVSKTAWASWHKLGLWIGLLVPVVLLIGALLVWKTGAWRQWLLCIKRGCERDPESANSVHSSLLDRQTSSTTNDSNHNTEPGKTQKTGKKLLVPVNGNDSADDLKFIFEYCSDIVPFDSWNRLMRQLGLTDNQIQMVKAETLVTREALYQMLLKWRHQTGRSASINHLLDALEAVEERDAMEKIEDYAVKSGRFTYQNAAAQPETGPGGSQCV.

Residues 1–52 form the signal peptide; the sequence is MEPPGPSTPTASAAARADHYTPGLRPLPKRRLLYSFALLLAVLQAVFVPVTA. 3 TNFR-Cys repeats span residues 26-86, 87-129, and 130-169; these read PLPK…GNCK, PCRE…NTVC, and RCKP…NRKC. Over 53 to 180 the chain is Extracellular; sequence NPAHNRPAGL…SKTAWASWHK (128 aa). 7 cysteine pairs are disulfide-bonded: cysteine 74–cysteine 85, cysteine 88–cysteine 105, cysteine 108–cysteine 121, cysteine 111–cysteine 129, cysteine 131–cysteine 145, cysteine 148–cysteine 161, and cysteine 151–cysteine 169. The helical transmembrane segment at 181–201 threads the bilayer; sequence LGLWIGLLVPVVLLIGALLVW. The Cytoplasmic portion of the chain corresponds to 202 to 381; the sequence is KTGAWRQWLL…ETGPGGSQCV (180 aa). Residues 228-260 form a disordered region; that stretch reads HSSLLDRQTSSTTNDSNHNTEPGKTQKTGKKLL. The span at 236–247 shows a compositional bias: low complexity; the sequence is TSSTTNDSNHNT. The 84-residue stretch at 273–356 folds into the Death domain; sequence KFIFEYCSDI…DAMEKIEDYA (84 aa). (Microbial infection) N-beta-linked (GlcNAc) arginine glycosylation occurs at arginine 293.

In terms of assembly, monomer. Can interact with TRADD and RIPK1. Three TNFRSF10B molecules interact with the TNFSF10 homotrimer. In the absence of stimulation, interacts with BIRC2, DDX3X and GSK3B. The interaction with BIRC2 and DDX3X is further enhanced upon receptor stimulation and accompanied by DDX3X and BIRC2 cleavage. In terms of processing, (Microbial infection) Glycosylated at Arg-293 by S.typhimurium protein Ssek3. Highly expressed in heart, lung and kidney.

The protein resides in the membrane. In terms of biological role, receptor for the cytotoxic ligand TNFSF10/TRAIL. The adapter molecule FADD recruits caspase-8 to the activated receptor. The resulting death-inducing signaling complex (DISC) performs caspase-8 proteolytic activation which initiates the subsequent cascade of caspases (aspartate-specific cysteine proteases) mediating apoptosis. Promotes the activation of NF-kappa-B. Essential for ER stress-induced apoptosis. In Mus musculus (Mouse), this protein is Tumor necrosis factor receptor superfamily member 10B (Tnfrsf10b).